Consider the following 26-residue polypeptide: Unknown protein 16 (26 aa).

The interval 1–26 (AINSESGVRSVVPQPCNALPNQGPEK) is disordered.

The chain is Unknown protein 16 from Pseudotsuga menziesii (Douglas-fir).